The chain runs to 174 residues: Sarcoplasmic calcium-binding protein (174 aa).

Serine 1 carries the N-acetylserine modification. EF-hand domains are found at residues 3-38 (LWVQKMKTYFNRIDFDKDGAITRKDFESMATRFAKE), 55-90 (GVWDKFLANVAGGKGIDQATFISSMKEKVKDPNAKA), 91-126 (VVEGPLPLFFRAVDTNEDNMISRDEYGIFFNMLGLN), and 125-160 (LNPDMAPASFDAIDTNNDGLLSQEEFVTAGSDFFIN). Ca(2+) is bound by residues aspartate 16, aspartate 18, aspartate 20, and aspartate 27. Ca(2+) is bound by residues aspartate 104, asparagine 106, aspartate 108, methionine 110, glutamate 115, aspartate 138, asparagine 140, aspartate 142, and glutamate 149.

Like parvalbumins, SCPs seem to be more abundant in fast contracting muscles, but no functional relationship can be established from this distribution. The polypeptide is Sarcoplasmic calcium-binding protein (Perinereis vancaurica tetradentata (Sandworm)).